Consider the following 230-residue polypeptide: Protein LURP-one-related 11 (230 aa).

This sequence belongs to the LOR family.

In terms of biological role, might be related to the phospholipid scramblase and tubby-like superfamily of membrane tethered transcription factors. The polypeptide is Protein LURP-one-related 11 (Arabidopsis thaliana (Mouse-ear cress)).